Consider the following 527-residue polypeptide: Probable bifunctional tRNA threonylcarbamoyladenosine biosynthesis protein (527 aa).

Residues 1–324 (MIVLGLEGTA…YRIDEVDAPW (324 aa)) are kae1. The Fe cation site is built by His107, His111, and Tyr128. L-threonylcarbamoyladenylate is bound by residues 128 to 132 (YVSGG), Asp160, Gly173, Glu177, and Asn257. Asp285 is a Fe cation binding site. The Protein kinase domain maps to 330 to 527 (VKYRDAGAES…EDIRRRHRYV (198 aa)). Residues 333 to 341 (RDAGAESRI) and Lys354 contribute to the ATP site. Residue Asp445 is the Proton acceptor; for kinase activity of the active site.

In the N-terminal section; belongs to the KAE1 / TsaD family. It in the C-terminal section; belongs to the protein kinase superfamily. Tyr protein kinase family. BUD32 subfamily. In terms of assembly, component of the KEOPS complex that consists of Kae1, Bud32, Cgi121 and Pcc1; the whole complex dimerizes. Fe(2+) is required as a cofactor.

The protein resides in the cytoplasm. The enzyme catalyses L-seryl-[protein] + ATP = O-phospho-L-seryl-[protein] + ADP + H(+). It carries out the reaction L-threonyl-[protein] + ATP = O-phospho-L-threonyl-[protein] + ADP + H(+). The catalysed reaction is L-threonylcarbamoyladenylate + adenosine(37) in tRNA = N(6)-L-threonylcarbamoyladenosine(37) in tRNA + AMP + H(+). Its function is as follows. Required for the formation of a threonylcarbamoyl group on adenosine at position 37 (t(6)A37) in tRNAs that read codons beginning with adenine. Is a component of the KEOPS complex that is probably involved in the transfer of the threonylcarbamoyl moiety of threonylcarbamoyl-AMP (TC-AMP) to the N6 group of A37. The Kae1 domain likely plays a direct catalytic role in this reaction. The Bud32 domain probably displays kinase activity that regulates Kae1 function. This is Probable bifunctional tRNA threonylcarbamoyladenosine biosynthesis protein from Thermoplasma volcanium (strain ATCC 51530 / DSM 4299 / JCM 9571 / NBRC 15438 / GSS1).